The primary structure comprises 250 residues: Proteasome subunit alpha type-4-2 (250 aa).

As to quaternary structure, the 26S proteasome consists of a 20S proteasome core and two 19S regulatory subunits. The 20S proteasome core is composed of 28 subunits that are arranged in four stacked rings, resulting in a barrel-shaped structure. The two end rings are each formed by seven alpha subunits, and the two central rings are each formed by seven beta subunits. The catalytic chamber with the active sites is on the inside of the barrel.

It is found in the cytoplasm. Its subcellular location is the nucleus. The proteasome is a multicatalytic proteinase complex which is characterized by its ability to cleave peptides with Arg, Phe, Tyr, Leu, and Glu adjacent to the leaving group at neutral or slightly basic pH. The proteasome has an ATP-dependent proteolytic activity. The polypeptide is Proteasome subunit alpha type-4-2 (Oryza sativa subsp. indica (Rice)).